Consider the following 84-residue polypeptide: Cell division topological specificity factor (84 aa).

The protein belongs to the MinE family.

Its function is as follows. Prevents the cell division inhibition by proteins MinC and MinD at internal division sites while permitting inhibition at polar sites. This ensures cell division at the proper site by restricting the formation of a division septum at the midpoint of the long axis of the cell. This is Cell division topological specificity factor from Cupriavidus metallidurans (strain ATCC 43123 / DSM 2839 / NBRC 102507 / CH34) (Ralstonia metallidurans).